We begin with the raw amino-acid sequence, 274 residues long: tRNA-cytidine(32) 2-sulfurtransferase (274 aa).

The PP-loop motif signature appears at 40 to 45; sequence SGGKDS. Positions 115, 118, and 206 each coordinate [4Fe-4S] cluster.

It belongs to the TtcA family. As to quaternary structure, homodimer. Mg(2+) serves as cofactor. The cofactor is [4Fe-4S] cluster.

The protein localises to the cytoplasm. It catalyses the reaction cytidine(32) in tRNA + S-sulfanyl-L-cysteinyl-[cysteine desulfurase] + AH2 + ATP = 2-thiocytidine(32) in tRNA + L-cysteinyl-[cysteine desulfurase] + A + AMP + diphosphate + H(+). It functions in the pathway tRNA modification. Catalyzes the ATP-dependent 2-thiolation of cytidine in position 32 of tRNA, to form 2-thiocytidine (s(2)C32). The sulfur atoms are provided by the cysteine/cysteine desulfurase (IscS) system. The polypeptide is tRNA-cytidine(32) 2-sulfurtransferase (Pseudomonas syringae pv. syringae (strain B728a)).